A 167-amino-acid chain; its full sequence is Probable chemoreceptor glutamine deamidase CheD (167 aa).

This sequence belongs to the CheD family.

It carries out the reaction L-glutaminyl-[protein] + H2O = L-glutamyl-[protein] + NH4(+). In terms of biological role, probably deamidates glutamine residues to glutamate on methyl-accepting chemotaxis receptors (MCPs), playing an important role in chemotaxis. The protein is Probable chemoreceptor glutamine deamidase CheD of Moorella thermoacetica (strain ATCC 39073 / JCM 9320).